Reading from the N-terminus, the 230-residue chain is Sugar fermentation stimulation protein homolog (230 aa).

The protein belongs to the SfsA family.

The sequence is that of Sugar fermentation stimulation protein homolog from Clostridium acetobutylicum (strain ATCC 824 / DSM 792 / JCM 1419 / IAM 19013 / LMG 5710 / NBRC 13948 / NRRL B-527 / VKM B-1787 / 2291 / W).